Consider the following 446-residue polypeptide: F-box/LRR-repeat protein At4g29420 (446 aa).

Positions 1–51 (MDELPPELWIKILSRINDSESLARCRVASKTLNSLSREVRAVNLICTWSRY) constitute an F-box domain. LRR repeat units lie at residues 59-84 (VVTP…SVGV), 103-130 (DLYL…SISD), 135-160 (SCWR…EVKN), 181-206 (FIRL…NLIG), 223-248 (CHWT…KLKC), 265-289 (HLSV…ELVS), 318-343 (QSER…SLSP), and 382-407 (NVHQ…RLMI).

The chain is F-box/LRR-repeat protein At4g29420 from Arabidopsis thaliana (Mouse-ear cress).